A 187-amino-acid polypeptide reads, in one-letter code: Protein Flattop (187 aa).

A disordered region spans residues 97–187 (THSGHGIHTH…TPQLEREEPQ (91 aa)). A compositionally biased stretch (polar residues) spans 122–131 (EGDQTCNAPT). The segment covering 169-187 (KRREQSLEETPQLEREEPQ) has biased composition (basic and acidic residues).

It belongs to the Flattop family.

It is found in the cytoplasm. The protein resides in the cytoskeleton. It localises to the cilium basal body. Its subcellular location is the cell projection. The protein localises to the cilium. It is found in the apical cell membrane. The protein resides in the cilium axoneme. Functionally, microtubule inner protein (MIP) part of the dynein-decorated doublet microtubules (DMTs) in cilia axoneme. Acts as a regulator of cilium basal body docking and positioning in mono- and multiciliated cells. Regulates basal body docking and cilia formation in multiciliated lung cells. Regulates kinocilium positioning and stereocilia bundle morphogenesis in the inner ear. The polypeptide is Protein Flattop (Salmo salar (Atlantic salmon)).